Here is an 840-residue protein sequence, read N- to C-terminus: SLIT and NTRK-like protein 6 (840 aa).

Residues 1-18 (MKLWTYLLYPSLLACLSL) form the signal peptide. Residues 22–67 (SPMPSVRGSCDTLCNCEEKDGIMIINCEEKGINKLSQISVPPSRPF) enclose the LRRNT 1 domain. The Extracellular segment spans residues 23–609 (PMPSVRGSCD…LTDAVPLSVL (587 aa)). LRR repeat units follow at residues 89-110 (NALS…AFNG), 113-134 (LLKQ…TFHG), 137-158 (NLEF…AFSK), 161-182 (RLKV…IFRF), and 184-205 (PLTH…GFLE). One can recognise an LRRCT 1 domain in the interval 218–269 (NKWACNCELLQLKNWLENMPPQSIIGDVICYSPPPFKGSVLSRLKKESFCPT). The LRRNT 2 domain maps to 319 to 360 (PSTQLPVPYCPIPCNCKVLSPSGLLIHCQERNIESLSDLQPP). LRR repeat units follow at residues 363 to 384 (NPRK…DLTD), 387 to 408 (TLEM…SFMN), 411 to 432 (RLQK…MFLG), 435 to 456 (SLEY…TFNP), 459 to 480 (KLKV…IFLG), and 482 to 503 (PLTR…NILD). The 52-residue stretch at 516 to 567 (NPWDCSCDLVGLQQWIHKLGKGTMTDDILCTSPGHLDKKELKALNSDLLCPG) folds into the LRRCT 2 domain. Residues 610–630 (ILGLLIVFITIVFCAAGIVVF) form a helical membrane-spanning segment. The Cytoplasmic segment spans residues 631–840 (VLHRRRRYKK…DYLEVLEQQT (210 aa)). Residues 717–726 (QRSLLERENH) are compositionally biased toward basic and acidic residues. A disordered region spans residues 717-736 (QRSLLERENHSPLTGSNMKY). Residues 727–736 (SPLTGSNMKY) are compositionally biased toward polar residues.

This sequence belongs to the SLITRK family. In terms of tissue distribution, in the embryo, expressed in otic cyst, lateral trunk epidermis and underlying mesodermal tissue, limb bud, maxillary process, cochlea, retina, tongue, tooth primordium, central nervous system, and primordia of visceral organs including lung, gastrointestinal tract and pancreas. In the central nervous system, expressed primarily in dorsal thalamus, cerebellum and medulla.

It localises to the cell membrane. Its function is as follows. Regulator of neurite outgrowth required for normal hearing and vision. The sequence is that of SLIT and NTRK-like protein 6 (Slitrk6) from Mus musculus (Mouse).